We begin with the raw amino-acid sequence, 169 residues long: Co-chaperone protein HscB homolog (169 aa).

The 73-residue stretch at 2–74 (NYFDLFSLPV…CLRAQYLLLL (73 aa)) folds into the J domain.

The protein belongs to the HscB family. Interacts with HscA and stimulates its ATPase activity.

Its function is as follows. Co-chaperone involved in the maturation of iron-sulfur cluster-containing proteins. Seems to help targeting proteins to be folded toward HscA. In Psychromonas ingrahamii (strain DSM 17664 / CCUG 51855 / 37), this protein is Co-chaperone protein HscB homolog.